A 506-amino-acid chain; its full sequence is ATP synthase subunit alpha (506 aa).

171 to 178 lines the ATP pocket; it reads GDRQTGKT.

Belongs to the ATPase alpha/beta chains family. F-type ATPases have 2 components, CF(1) - the catalytic core - and CF(0) - the membrane proton channel. CF(1) has five subunits: alpha(3), beta(3), gamma(1), delta(1), epsilon(1). CF(0) has four main subunits: a, b, b' and c.

It is found in the cellular thylakoid membrane. The catalysed reaction is ATP + H2O + 4 H(+)(in) = ADP + phosphate + 5 H(+)(out). Functionally, produces ATP from ADP in the presence of a proton gradient across the membrane. The alpha chain is a regulatory subunit. The polypeptide is ATP synthase subunit alpha (Nostoc punctiforme (strain ATCC 29133 / PCC 73102)).